We begin with the raw amino-acid sequence, 447 residues long: N-succinylarginine dihydrolase (447 aa).

Residues 19–28 (AGLSFGNEAS), N110, and 137–138 (HR) contribute to the substrate site. Residue E174 is part of the active site. R212 contacts substrate. Residue H248 is part of the active site. 2 residues coordinate substrate: D250 and N359. Catalysis depends on C365, which acts as the Nucleophile.

This sequence belongs to the succinylarginine dihydrolase family. In terms of assembly, homodimer.

It carries out the reaction N(2)-succinyl-L-arginine + 2 H2O + 2 H(+) = N(2)-succinyl-L-ornithine + 2 NH4(+) + CO2. The protein operates within amino-acid degradation; L-arginine degradation via AST pathway; L-glutamate and succinate from L-arginine: step 2/5. Catalyzes the hydrolysis of N(2)-succinylarginine into N(2)-succinylornithine, ammonia and CO(2). This is N-succinylarginine dihydrolase from Escherichia coli O17:K52:H18 (strain UMN026 / ExPEC).